Consider the following 503-residue polypeptide: Beta-mannosyltransferase 4 (503 aa).

At 1 to 24 the chain is on the cytoplasmic side; that stretch reads MKLDTQQISHLLSRQMYHLAPRKK. A helical membrane pass occupies residues 25-45; it reads LLIWGGSLGFVLLLLIVASSH. The Extracellular portion of the chain corresponds to 46–503; sequence QRIRSTILHR…QYCQRYGELH (458 aa). N-linked (GlcNAc...) asparagine glycosylation is present at Asn-468.

This sequence belongs to the BMT family.

The protein resides in the membrane. Beta-mannosyltransferase involved in cell wall biosynthesis. Responsible for addition of a hexose to the beta-mannose chain. The sequence is that of Beta-mannosyltransferase 4 (BMT4) from Komagataella phaffii (strain ATCC 76273 / CBS 7435 / CECT 11047 / NRRL Y-11430 / Wegner 21-1) (Yeast).